Here is a 269-residue protein sequence, read N- to C-terminus: 4-hydroxy-tetrahydrodipicolinate reductase (269 aa).

Residues 9-14 (GCAGKM), D35, 102-104 (GTT), and 128-131 (APNF) each bind NAD(+). H158 acts as the Proton donor/acceptor in catalysis. Position 159 (H159) interacts with (S)-2,3,4,5-tetrahydrodipicolinate. The active-site Proton donor is the K162. (S)-2,3,4,5-tetrahydrodipicolinate is bound at residue 168–169 (GT).

It belongs to the DapB family.

It localises to the cytoplasm. The catalysed reaction is (S)-2,3,4,5-tetrahydrodipicolinate + NAD(+) + H2O = (2S,4S)-4-hydroxy-2,3,4,5-tetrahydrodipicolinate + NADH + H(+). It carries out the reaction (S)-2,3,4,5-tetrahydrodipicolinate + NADP(+) + H2O = (2S,4S)-4-hydroxy-2,3,4,5-tetrahydrodipicolinate + NADPH + H(+). The protein operates within amino-acid biosynthesis; L-lysine biosynthesis via DAP pathway; (S)-tetrahydrodipicolinate from L-aspartate: step 4/4. In terms of biological role, catalyzes the conversion of 4-hydroxy-tetrahydrodipicolinate (HTPA) to tetrahydrodipicolinate. The chain is 4-hydroxy-tetrahydrodipicolinate reductase from Gloeobacter violaceus (strain ATCC 29082 / PCC 7421).